Consider the following 635-residue polypeptide: Probable extracellular metalloproteinase 1 (635 aa).

The first 19 residues, 1 to 19, serve as a signal peptide directing secretion; the sequence is MHGLLLAAGLLSLPLHVLA. The propeptide occupies 20–246; the sequence is HPQPSTSTSL…VHNVVDYVAH (227 aa). N-linked (GlcNAc...) asparagine glycosylation occurs at N287. H430 contributes to the Zn(2+) binding site. The active site involves E431. A Zn(2+)-binding site is contributed by H434. N-linked (GlcNAc...) asparagine glycosylation is found at N475, N594, and N623.

This sequence belongs to the peptidase M36 family. Zn(2+) is required as a cofactor.

Its subcellular location is the secreted. Its function is as follows. Secreted metalloproteinase probably acting as a virulence factor. This is Probable extracellular metalloproteinase 1 (MEP1) from Arthroderma benhamiae (strain ATCC MYA-4681 / CBS 112371) (Trichophyton mentagrophytes).